A 336-amino-acid polypeptide reads, in one-letter code: Ketol-acid reductoisomerase (NADP(+)) (336 aa).

The KARI N-terminal Rossmann domain maps to 1-182 (MAVIYYDKDA…GVTRAGVIET (182 aa)). Residues 25 to 28 (FGSQ), Arg-48, Ser-51, Ser-53, and 83 to 86 (DEHQ) contribute to the NADP(+) site. Residue His-108 is part of the active site. Gly-134 lines the NADP(+) pocket. In terms of domain architecture, KARI C-terminal knotted spans 183–328 (TFKEETETDL…KELRKMMPWL (146 aa)). Residues Asp-191, Glu-195, Glu-227, and Glu-231 each contribute to the Mg(2+) site. Substrate is bound at residue Ser-252.

The protein belongs to the ketol-acid reductoisomerase family. Requires Mg(2+) as cofactor.

The catalysed reaction is (2R)-2,3-dihydroxy-3-methylbutanoate + NADP(+) = (2S)-2-acetolactate + NADPH + H(+). The enzyme catalyses (2R,3R)-2,3-dihydroxy-3-methylpentanoate + NADP(+) = (S)-2-ethyl-2-hydroxy-3-oxobutanoate + NADPH + H(+). It functions in the pathway amino-acid biosynthesis; L-isoleucine biosynthesis; L-isoleucine from 2-oxobutanoate: step 2/4. It participates in amino-acid biosynthesis; L-valine biosynthesis; L-valine from pyruvate: step 2/4. In terms of biological role, involved in the biosynthesis of branched-chain amino acids (BCAA). Catalyzes an alkyl-migration followed by a ketol-acid reduction of (S)-2-acetolactate (S2AL) to yield (R)-2,3-dihydroxy-isovalerate. In the isomerase reaction, S2AL is rearranged via a Mg-dependent methyl migration to produce 3-hydroxy-3-methyl-2-ketobutyrate (HMKB). In the reductase reaction, this 2-ketoacid undergoes a metal-dependent reduction by NADPH to yield (R)-2,3-dihydroxy-isovalerate. The polypeptide is Ketol-acid reductoisomerase (NADP(+)) (Thermotoga neapolitana (strain ATCC 49049 / DSM 4359 / NBRC 107923 / NS-E)).